Consider the following 283-residue polypeptide: Elongation factor Ts (283 aa).

Positions 80–83 (TDFV) are involved in Mg(2+) ion dislocation from EF-Tu.

Belongs to the EF-Ts family.

The protein localises to the cytoplasm. Its function is as follows. Associates with the EF-Tu.GDP complex and induces the exchange of GDP to GTP. It remains bound to the aminoacyl-tRNA.EF-Tu.GTP complex up to the GTP hydrolysis stage on the ribosome. The polypeptide is Elongation factor Ts (Shigella boydii serotype 18 (strain CDC 3083-94 / BS512)).